We begin with the raw amino-acid sequence, 635 residues long: Chaperone protein HtpG (635 aa).

The a; substrate-binding stretch occupies residues 1-343; the sequence is MTAEATVETR…SNDLSLNVSR (343 aa). Residues 344–560 form a b region; it reads EILQQDPNID…EHDMGAQMRR (217 aa). A c region spans residues 561–635; it reads LLEAAGQAVP…LNKLLLELSN (75 aa).

It belongs to the heat shock protein 90 family. In terms of assembly, homodimer.

It is found in the cytoplasm. In terms of biological role, molecular chaperone. Has ATPase activity. The polypeptide is Chaperone protein HtpG (Saccharophagus degradans (strain 2-40 / ATCC 43961 / DSM 17024)).